A 589-amino-acid chain; its full sequence is 2-succinyl-5-enolpyruvyl-6-hydroxy-3-cyclohexene-1-carboxylate synthase (589 aa).

The interval 198 to 222 (DAATTEGAHDSHAPSQPTRGPRKLP) is disordered.

The protein belongs to the TPP enzyme family. MenD subfamily. Homodimer. Mg(2+) serves as cofactor. Requires Mn(2+) as cofactor. The cofactor is thiamine diphosphate.

It catalyses the reaction isochorismate + 2-oxoglutarate + H(+) = 5-enolpyruvoyl-6-hydroxy-2-succinyl-cyclohex-3-ene-1-carboxylate + CO2. The protein operates within quinol/quinone metabolism; 1,4-dihydroxy-2-naphthoate biosynthesis; 1,4-dihydroxy-2-naphthoate from chorismate: step 2/7. Its pathway is quinol/quinone metabolism; menaquinone biosynthesis. Catalyzes the thiamine diphosphate-dependent decarboxylation of 2-oxoglutarate and the subsequent addition of the resulting succinic semialdehyde-thiamine pyrophosphate anion to isochorismate to yield 2-succinyl-5-enolpyruvyl-6-hydroxy-3-cyclohexene-1-carboxylate (SEPHCHC). The polypeptide is 2-succinyl-5-enolpyruvyl-6-hydroxy-3-cyclohexene-1-carboxylate synthase (Corynebacterium jeikeium (strain K411)).